Consider the following 214-residue polypeptide: Large ribosomal subunit protein uL1 (214 aa).

Belongs to the universal ribosomal protein uL1 family. In terms of assembly, part of the 50S ribosomal subunit.

Its function is as follows. Binds directly to 23S rRNA. Probably involved in E site tRNA release. In terms of biological role, protein L1 is also a translational repressor protein, it controls the translation of its operon by binding to its mRNA. In Methanoregula boonei (strain DSM 21154 / JCM 14090 / 6A8), this protein is Large ribosomal subunit protein uL1.